Here is a 181-residue protein sequence, read N- to C-terminus: Histone deacetylase complex subunit SAP30L-B (181 aa).

2 cysteine pairs are disulfide-bonded: Cys26/Cys27 and Cys35/Cys71. An Atypical zinc finger spans residues 26-74 (CCLIDGGERCPRPAGNASFSKRVQKSISQKKLKLDIDKSVRHLYICDFH). The disordered stretch occupies residues 82–103 (RNKRKRKTSDDGGDSPEHETDV). Residues 83–88 (NKRKRK) carry the Nuclear localization signal (NLS) motif. The segment at 85-87 (RKR) is important for DNA and phosphoinositide binding.

It belongs to the SAP30 family. As to quaternary structure, interacts with components of the histone deacetylase complex sin3a, hdac1 and hdac2. Binds histones and nucleosomes.

The protein resides in the nucleus. The protein localises to the nucleolus. Functions as a transcription repressor, probably via its interaction with histone deacetylase complexes. Involved in the functional recruitment of the class 1 Sin3-histone deacetylase complex (HDAC) to the nucleolus. Binds DNA, apparently without sequence-specificity, and bends bound double-stranded DNA. Binds phosphoinositol phosphates (phosphoinositol 3-phosphate, phosphoinositol 4-phosphate and phosphoinositol 5-phosphate) via the same basic sequence motif that mediates DNA binding and nuclear import. This Xenopus laevis (African clawed frog) protein is Histone deacetylase complex subunit SAP30L-B (sap30l-b).